A 329-amino-acid polypeptide reads, in one-letter code: MEQQKAPQVTYLEVGSLVGHNGFVTSIAVSPENPDTIISSSRDKTVMVWQLTPTDATSPGKAHRSLKGHSHFVQDVVISHDGQFALSGSWDNTLRLWDITKGVSTRLFKGHTQDVMSVAFSSDNRQIISGSRDATIKVWNTLGECKFTLEGPEAHQDWVSCIRFSPNTPTIVSGSWDNKVKIWDIKSFKCNHTLTDHTGYVNTVTISPDGSLCASGGKDTFACLWELSSGKPLYKLEARNTINALAFSPNKYWLSAATDDKIIIWDLLTKQVLAEIVPEVKEQAFDSKKKKESKPKAPACLSLAWSADGSVLYAGYNDGLIRVYKSSSQ.

WD repeat units follow at residues 19–59, 68–107, 110–149, 154–193, 196–235, 237–275, and 295–328; these read GHNG…ATSP, GHSHFVQDVVISHDGQFALSGSWDNTLRLWDITKGVSTRL, GHTQDVMSVAFSSDNRQIISGSRDATIKVWNTLGECKFTL, AHQDWVSCIRFSPNTPTIVSGSWDNKVKIWDIKSFKCNHT, DHTGYVNTVTISPDGSLCASGGKDTFACLWELSSGKPLYK, EARNTINALAFSPNKYWLSAATDDKIIIWDLLTKQVLAE, and PKAPACLSLAWSADGSVLYAGYNDGLIRVYKSSS.

The protein belongs to the WD repeat G protein beta family. Ribosomal protein RACK1 subfamily.

The chain is Small ribosomal subunit protein RACK1 (gpbB) from Dictyostelium discoideum (Social amoeba).